Here is a 194-residue protein sequence, read N- to C-terminus: Serine/threonine-protein kinase mos (194 aa).

Residues 47 to 194 (LCLLHLLGSG…HLDLKPANIF (148 aa)) enclose the Protein kinase domain. ATP-binding positions include 53–61 (LGSGGFGSV) and K74. D187 (proton acceptor) is an active-site residue.

This sequence belongs to the protein kinase superfamily. Ser/Thr protein kinase family.

The catalysed reaction is L-seryl-[protein] + ATP = O-phospho-L-seryl-[protein] + ADP + H(+). The enzyme catalyses L-threonyl-[protein] + ATP = O-phospho-L-threonyl-[protein] + ADP + H(+). The polypeptide is Serine/threonine-protein kinase mos (MOS) (Atheris squamigera (Variable bush viper)).